We begin with the raw amino-acid sequence, 160 residues long: Cyclic pyranopterin monophosphate synthase (160 aa).

Residues 77 to 79 (MCH) and 114 to 115 (ME) each bind substrate. D129 is a catalytic residue.

This sequence belongs to the MoaC family. As to quaternary structure, homohexamer; trimer of dimers.

The catalysed reaction is (8S)-3',8-cyclo-7,8-dihydroguanosine 5'-triphosphate = cyclic pyranopterin phosphate + diphosphate. It functions in the pathway cofactor biosynthesis; molybdopterin biosynthesis. Functionally, catalyzes the conversion of (8S)-3',8-cyclo-7,8-dihydroguanosine 5'-triphosphate to cyclic pyranopterin monophosphate (cPMP). This Listeria innocua serovar 6a (strain ATCC BAA-680 / CLIP 11262) protein is Cyclic pyranopterin monophosphate synthase.